A 49-amino-acid polypeptide reads, in one-letter code: Large ribosomal subunit protein bL33A (49 aa).

The protein belongs to the bacterial ribosomal protein bL33 family.

The chain is Large ribosomal subunit protein bL33A from Mycoplasmopsis agalactiae (strain NCTC 10123 / CIP 59.7 / PG2) (Mycoplasma agalactiae).